The primary structure comprises 541 residues: Membrane protein insertase YidC (541 aa).

5 helical membrane-spanning segments follow: residues 7 to 27 (LLFM…QVDY), 345 to 365 (LVQN…AILY), 415 to 435 (LGGC…YWTF), 453 to 473 (LSAQ…MFLL), and 492 to 512 (FMPL…VLYW).

This sequence belongs to the OXA1/ALB3/YidC family. Type 1 subfamily. In terms of assembly, interacts with the Sec translocase complex via SecD. Specifically interacts with transmembrane segments of nascent integral membrane proteins during membrane integration.

The protein localises to the cell inner membrane. Required for the insertion and/or proper folding and/or complex formation of integral membrane proteins into the membrane. Involved in integration of membrane proteins that insert both dependently and independently of the Sec translocase complex, as well as at least some lipoproteins. Aids folding of multispanning membrane proteins. This chain is Membrane protein insertase YidC, found in Histophilus somni (strain 129Pt) (Haemophilus somnus).